We begin with the raw amino-acid sequence, 28 residues long: M-poneritoxin-Dq4b/U1-poneritoxin-Dq4c/U1-poneritoxin-Dq4d (28 aa).

Residue Met-20 is modified to Methionine sulfoxide; in form U1-PONTX-Dq4d. Position 28 is an alanine amide; in form Dq-1362 and U1-PONTX-Dq4d (Ala-28).

In terms of processing, occurs in 3 forms, M-PONTX-Dq4b has an amidated Ala-28, U1-PONTX-Dq4d has an amidated Ala-28 and an oxidized Met-20, U1-PONTX-Dq4c has no modifications at either Met-20 or Ala-28. As to expression, expressed by the venom gland.

It is found in the secreted. Functionally, M-poneritoxin-Dq4b: this synthetic peptide has antimicrobial activity against Gram-positive bacteria B.amyloliquefacies S499 (MIC=0.1 mM), L.monocytogenes 2231 and S.aureus ATCC 29213, against Gram-negative bacteria P.putida BTP1, P.aeruginosa PaO1 and E.coli ATCC 10536, and against the fungi S.cerevisiae, R.mucilaginosa and C.cucumerinum. Not active against the fungi F.oxysporum and B.cinerea. The protein is M-poneritoxin-Dq4b/U1-poneritoxin-Dq4c/U1-poneritoxin-Dq4d of Dinoponera quadriceps (South American ant).